The chain runs to 957 residues: Iron-responsive element-binding protein 2 (957 aa).

Cysteine 506, cysteine 572, and cysteine 575 together coordinate [4Fe-4S] cluster.

The protein belongs to the aconitase/IPM isomerase family. [4Fe-4S] cluster is required as a cofactor. Ubiquitinated and degraded by the proteasome in presence of high level of iron and oxygen.

It localises to the cytoplasm. In terms of biological role, RNA-binding protein that binds to iron-responsive elements (IRES), which are stem-loop structures found in the 5'-UTR of ferritin, and delta aminolevulinic acid synthase mRNAs, and in the 3'-UTR of transferrin receptor mRNA. Binding to the IRE element in ferritin results in the repression of its mRNA translation. Binding of the protein to the transferrin receptor mRNA inhibits the degradation of this otherwise rapidly degraded mRNA. In Xenopus tropicalis (Western clawed frog), this protein is Iron-responsive element-binding protein 2 (ireb2).